The primary structure comprises 443 residues: Xaa-Pro dipeptidase (443 aa).

5 residues coordinate Mn(2+): Asp-246, Asp-257, His-339, Glu-384, and Glu-423.

It belongs to the peptidase M24B family. Bacterial-type prolidase subfamily. It depends on Mn(2+) as a cofactor.

The enzyme catalyses Xaa-L-Pro dipeptide + H2O = an L-alpha-amino acid + L-proline. Its function is as follows. Splits dipeptides with a prolyl residue in the C-terminal position. The polypeptide is Xaa-Pro dipeptidase (Escherichia coli O7:K1 (strain IAI39 / ExPEC)).